Consider the following 114-residue polypeptide: Large ribosomal subunit protein bL19 (114 aa).

It belongs to the bacterial ribosomal protein bL19 family.

In terms of biological role, this protein is located at the 30S-50S ribosomal subunit interface and may play a role in the structure and function of the aminoacyl-tRNA binding site. In Acidithiobacillus ferrooxidans (strain ATCC 23270 / DSM 14882 / CIP 104768 / NCIMB 8455) (Ferrobacillus ferrooxidans (strain ATCC 23270)), this protein is Large ribosomal subunit protein bL19.